The sequence spans 466 residues: MITLYNTLTRQKETFEPIEPGKVKMYVCGPTVYNYIHIGNARPAINYDVVRRYFEYQGYEVVFVSNFTDVDDKLIKRSKELDESVETIADRYIDAFYEDVGALNVKKATSNPRVMNHMDDIINFIKDLVDEGYAYESGGDVYFRTRKFQDYGKLSHQSLNDLKVGARIEQGEQKEDALDFTLWKQAKPGEISWESPFGEGRPGWHIECSVMAYHELGATIDIHAGGTDLQFPHHENEIAQSEAHNHAPFANYWMHNGFINIDNEKMSKSLGNFVLVHDIIKQIDPDVLRFFMISVHYRSPINYNMELVEAAKSGLERVRNSYQAIEEREAIATDIEAQSDYIAEIDKILEQFETVMNDDFNTANAITAWYDLAKLANKYVLENTTSTKVLGRFKEVYQIFSDVLGVPLKGKDSDELLDEEVEALIEERNNARKDKDFARADEIRDQLKEQNIILEDTPQGVRFKRG.

Cys-28 contacts Zn(2+). The 'HIGH' region signature appears at 30 to 40; that stretch reads PTVYNYIHIGN. Cys-208, His-233, and Glu-237 together coordinate Zn(2+). Residues 265-269 carry the 'KMSKS' region motif; sequence KMSKS. Lys-268 provides a ligand contact to ATP.

Belongs to the class-I aminoacyl-tRNA synthetase family. As to quaternary structure, monomer. It depends on Zn(2+) as a cofactor.

The protein localises to the cytoplasm. It catalyses the reaction tRNA(Cys) + L-cysteine + ATP = L-cysteinyl-tRNA(Cys) + AMP + diphosphate. This is Cysteine--tRNA ligase from Staphylococcus saprophyticus subsp. saprophyticus (strain ATCC 15305 / DSM 20229 / NCIMB 8711 / NCTC 7292 / S-41).